Reading from the N-terminus, the 188-residue chain is Probable DNA-directed RNA polymerase subunit delta (188 aa).

Positions 14–83 (LSMIEVARAI…GENKWGLRSW (70 aa)) constitute an HTH HARE-type domain. Residues 119 to 188 (EDAIDYSADD…EDEEDEDEEE (70 aa)) form a disordered region.

This sequence belongs to the RpoE family. RNAP is composed of a core of 2 alpha, a beta and a beta' subunits. The core is associated with a delta subunit and one of several sigma factors.

Participates in both the initiation and recycling phases of transcription. In the presence of the delta subunit, RNAP displays an increased specificity of transcription, a decreased affinity for nucleic acids, and an increased efficiency of RNA synthesis because of enhanced recycling. The polypeptide is Probable DNA-directed RNA polymerase subunit delta (Streptococcus equi subsp. zooepidemicus (strain H70)).